The primary structure comprises 223 residues: Neurotrophic factor BDNF precursor form (223 aa).

An N-terminal signal peptide occupies residues 1 to 5 (SCMKA). Positions 6 to 114 (APMKEVSIRG…AANMSMRVRR (109 aa)) are excised as a propeptide. The N-linked (GlcNAc...) asparagine glycan is linked to N107. 2 disulfides stabilise this stretch: C127–C194 and C172–C223.

This sequence belongs to the NGF-beta family.

It localises to the secreted. Promotes the survival of neuronal populations that are all located either in the central nervous system or directly connected to it. The polypeptide is Neurotrophic factor BDNF precursor form (BDNF) (Boa constrictor (Boa)).